Here is a 399-residue protein sequence, read N- to C-terminus: tRNA-specific 2-thiouridylase MnmA (399 aa).

ATP-binding positions include 18–25 and Leu44; that span reads AMSGGVDS. The active-site Nucleophile is the Cys112. A disulfide bridge links Cys112 with Cys213. Residue Gly136 participates in ATP binding. Residues 163 to 165 are interaction with tRNA; the sequence is RDQ. Cys213 functions as the Cysteine persulfide intermediate in the catalytic mechanism.

The protein belongs to the MnmA/TRMU family.

The protein localises to the cytoplasm. It carries out the reaction S-sulfanyl-L-cysteinyl-[protein] + uridine(34) in tRNA + AH2 + ATP = 2-thiouridine(34) in tRNA + L-cysteinyl-[protein] + A + AMP + diphosphate + H(+). Catalyzes the 2-thiolation of uridine at the wobble position (U34) of tRNA, leading to the formation of s(2)U34. In Rhizobium leguminosarum bv. trifolii (strain WSM2304), this protein is tRNA-specific 2-thiouridylase MnmA.